A 544-amino-acid chain; its full sequence is GMP synthase [glutamine-hydrolyzing] (544 aa).

One can recognise a Glutamine amidotransferase type-1 domain in the interval 12–210 (TILILDFGSQ…VKNVCSVRDG (199 aa)). Cys88 functions as the Nucleophile in the catalytic mechanism. Catalysis depends on residues His184 and Glu186. Residues 211-419 (WSMESFIPKE…LNIPEHLVGR (209 aa)) enclose the GMPS ATP-PPase domain. 239 to 245 (SGGVDST) contributes to the ATP binding site. XMP-binding residues include Arg312, Asp481, Lys536, and Glu542.

Homodimer. Also forms a small population of homotetramers. Mg(2+) serves as cofactor.

It is found in the cytoplasm. The protein localises to the cytosol. The catalysed reaction is XMP + L-glutamine + ATP + H2O = GMP + L-glutamate + AMP + diphosphate + 2 H(+). The protein operates within purine metabolism; GMP biosynthesis; GMP from XMP (L-Gln route): step 1/1. Its function is as follows. Catalyzes the conversion of xanthine monophosphate (XMP) to GMP in the presence of glutamine and ATP through an adenyl-XMP intermediate. The sequence is that of GMP synthase [glutamine-hydrolyzing] from Cryptococcus neoformans var. neoformans serotype D (strain JEC21 / ATCC MYA-565) (Filobasidiella neoformans).